The sequence spans 141 residues: Large ribosomal subunit protein uL11 (141 aa).

The protein belongs to the universal ribosomal protein uL11 family. As to quaternary structure, part of the ribosomal stalk of the 50S ribosomal subunit. Interacts with L10 and the large rRNA to form the base of the stalk. L10 forms an elongated spine to which L12 dimers bind in a sequential fashion forming a multimeric L10(L12)X complex. Post-translationally, one or more lysine residues are methylated.

Functionally, forms part of the ribosomal stalk which helps the ribosome interact with GTP-bound translation factors. This chain is Large ribosomal subunit protein uL11, found in Geobacillus kaustophilus (strain HTA426).